The chain runs to 390 residues: Protein-glutamate methylesterase/protein-glutamine glutaminase (390 aa).

The region spanning 4–121 (RALVVDDSGF…SGDMEQVKRQ (118 aa)) is the Response regulatory domain. Aspartate 55 is modified (4-aspartylphosphate). Residues 130-198 (GGGRGAPAGR…AAPAPERGQR (69 aa)) are disordered. Low complexity-rich tracts occupy residues 136–148 (PAGRAPRPAAPVD) and 179–193 (EAPVAPTGAPAAPAP). A CheB-type methylesterase domain is found at 201–390 (PGALRLVVIG…QVGEELAKLR (190 aa)). Active-site residues include serine 212, histidine 239, and aspartate 335.

The protein belongs to the CheB family. In terms of processing, phosphorylated by CheA. Phosphorylation of the N-terminal regulatory domain activates the methylesterase activity.

Its subcellular location is the cytoplasm. It carries out the reaction [protein]-L-glutamate 5-O-methyl ester + H2O = L-glutamyl-[protein] + methanol + H(+). The catalysed reaction is L-glutaminyl-[protein] + H2O = L-glutamyl-[protein] + NH4(+). Functionally, involved in chemotaxis. Part of a chemotaxis signal transduction system that modulates chemotaxis in response to various stimuli. Catalyzes the demethylation of specific methylglutamate residues introduced into the chemoreceptors (methyl-accepting chemotaxis proteins or MCP) by CheR. Also mediates the irreversible deamidation of specific glutamine residues to glutamic acid. The protein is Protein-glutamate methylesterase/protein-glutamine glutaminase of Alkalilimnicola ehrlichii (strain ATCC BAA-1101 / DSM 17681 / MLHE-1).